The primary structure comprises 103 residues: Small ribosomal subunit protein uS10 (103 aa).

The protein belongs to the universal ribosomal protein uS10 family. In terms of assembly, part of the 30S ribosomal subunit.

Involved in the binding of tRNA to the ribosomes. This is Small ribosomal subunit protein uS10 from Vibrio campbellii (strain ATCC BAA-1116).